The chain runs to 473 residues: Asparagine--tRNA ligase (473 aa).

It belongs to the class-II aminoacyl-tRNA synthetase family. Homodimer.

Its subcellular location is the cytoplasm. The catalysed reaction is tRNA(Asn) + L-asparagine + ATP = L-asparaginyl-tRNA(Asn) + AMP + diphosphate + H(+). In Treponema denticola (strain ATCC 35405 / DSM 14222 / CIP 103919 / JCM 8153 / KCTC 15104), this protein is Asparagine--tRNA ligase.